The following is a 324-amino-acid chain: GDP-mannose transporter (324 aa).

Topologically, residues 1–13 (MSELKSRIGNSGS) are cytoplasmic. A helical transmembrane segment spans residues 14-34 (IANSGPVSILCYCASSILMTV). At 35–44 (TNKFVVNTDG) the chain is on the lumenal side. A helical membrane pass occupies residues 45–65 (FNMFFVMLFAQSLVCTMCLMV). Over 66 to 76 (LKMFGYAKYRP) the chain is Cytoplasmic. Residues 77–97 (LNLIDVKNWLPISFLLVFMIF) form a helical membrane-spanning segment. At 98 to 116 (TSAKALKYMPVPIYTIFKN) the chain is on the lumenal side. A glycan (N-linked (GlcNAc...) asparagine) is linked at N116. The chain crosses the membrane as a helical span at residues 117–137 (LTIILIAYGEVLFFGGSVTPM). E138 is a topological domain (cytoplasmic). The helical transmembrane segment at 139 to 159 (LSSFILMVLSSVVASLGDQQA) threads the bilayer. The Lumenal portion of the chain corresponds to 160–170 (AKIAQPLANNS). An N-linked (GlcNAc...) asparagine glycan is attached at N168. Residues 171–191 (ILSPEYYWMFLNCICSASFVL) traverse the membrane as a helical segment. Over 192–204 (IMRKRIKLTNFKD) the chain is Cytoplasmic. A helical membrane pass occupies residues 205–225 (YDTMFYNNALALPILLGFSFL). Residues 226–243 (SEDWSSENLAQNFSGESL) are Lumenal-facing. N-linked (GlcNAc...) asparagine glycosylation occurs at N237. A helical transmembrane segment spans residues 244 to 264 (SAMIISGMTSVGISYCSGWCV). The Cytoplasmic segment spans residues 265-270 (RATSST). A helical transmembrane segment spans residues 271–291 (TYSMVGALNKLPIALAGLIFF). At 292–295 (DAPR) the chain is on the lumenal side. A helical membrane pass occupies residues 296–316 (NFLSIMSIFIGFASGLSYAVA). The Cytoplasmic segment spans residues 317–324 (KQKKVQKN).

This sequence belongs to the TPT transporter family. SLC35D subfamily. In terms of assembly, homooligomer.

Its subcellular location is the golgi apparatus membrane. The protein resides in the cytoplasmic vesicle membrane. It localises to the endoplasmic reticulum membrane. Involved in the import of GDP-mannose from the cytoplasm into the Golgi lumen. The chain is GDP-mannose transporter (VRG4) from Candida glabrata (strain ATCC 2001 / BCRC 20586 / JCM 3761 / NBRC 0622 / NRRL Y-65 / CBS 138) (Yeast).